Reading from the N-terminus, the 400-residue chain is Serine/threonine transporter SstT (400 aa).

8 consecutive transmembrane segments (helical) span residues 14-34 (IIIA…VTPY), 48-68 (SVAP…FQVG), 76-96 (VLLL…IASL), 136-156 (AISE…GLAM), 177-197 (IIHK…AVTF), 211-231 (LLAV…PILV), 293-313 (LAGA…TLGI), and 334-354 (ASGV…LFGI).

This sequence belongs to the dicarboxylate/amino acid:cation symporter (DAACS) (TC 2.A.23) family.

The protein localises to the cell inner membrane. It carries out the reaction L-serine(in) + Na(+)(in) = L-serine(out) + Na(+)(out). The catalysed reaction is L-threonine(in) + Na(+)(in) = L-threonine(out) + Na(+)(out). Functionally, involved in the import of serine and threonine into the cell, with the concomitant import of sodium (symport system). The protein is Serine/threonine transporter SstT of Acinetobacter baumannii (strain SDF).